The sequence spans 568 residues: PTS system lactose-specific EIICB component (568 aa).

Residues 7-409 (LIEKGKPFFE…VVDTIIYYPF (403 aa)) enclose the PTS EIIC type-3 domain. 9 helical membrane passes run 30–50 (GFIAGMPVILFSSIFILIAYV), 62–82 (IETFLMTPYSYSMGILAFFVG), 103–123 (INFLSTMLASMVGFLLMAAEP), 128–148 (GFLTAFMGTKGLLTAFIAAFV), 183–203 (FTVSVVLLYGLELLVKGTLGV), 222–242 (GYLGITLIFGAYAFFWFVGIH), 283–303 (FIATMGGTGATLIVPFLFMWI), 339–359 (IFFVPFIFAPIVNVWIFKFFV), and 389–409 (VLSFILAGLLVVVDTIIYYPF). Positions 466–568 (ETNVLVLCAG…ALAFVQQQFD (103 aa)) constitute a PTS EIIB type-3 domain. Cys-473 (phosphocysteine intermediate; for EIIB activity) is an active-site residue. Cys-473 carries the phosphocysteine; by EIIA modification.

It localises to the cell membrane. The enzyme catalyses lactose(out) + N(pros)-phospho-L-histidyl-[protein] = lactose 6-phosphate(in) + L-histidyl-[protein]. The phosphoenolpyruvate-dependent sugar phosphotransferase system (sugar PTS), a major carbohydrate active transport system, catalyzes the phosphorylation of incoming sugar substrates concomitantly with their translocation across the cell membrane. The enzyme II LacEF PTS system is involved in lactose transport. The chain is PTS system lactose-specific EIICB component from Lactococcus lactis subsp. lactis (Streptococcus lactis).